The primary structure comprises 401 residues: S-adenosylmethionine synthase (401 aa).

135–140 (GHGSGD) contributes to the ATP binding site.

The protein belongs to the AdoMet synthase 2 family. Mg(2+) is required as a cofactor.

The enzyme catalyses L-methionine + ATP + H2O = S-adenosyl-L-methionine + phosphate + diphosphate. The protein operates within amino-acid biosynthesis; S-adenosyl-L-methionine biosynthesis; S-adenosyl-L-methionine from L-methionine: step 1/1. Catalyzes the formation of S-adenosylmethionine from methionine and ATP. This Methanobrevibacter smithii (strain ATCC 35061 / DSM 861 / OCM 144 / PS) protein is S-adenosylmethionine synthase.